Reading from the N-terminus, the 95-residue chain is Small ribosomal subunit protein bS18 (95 aa).

It belongs to the bacterial ribosomal protein bS18 family. In terms of assembly, part of the 30S ribosomal subunit. Forms a tight heterodimer with protein bS6.

Binds as a heterodimer with protein bS6 to the central domain of the 16S rRNA, where it helps stabilize the platform of the 30S subunit. The sequence is that of Small ribosomal subunit protein bS18 from Rickettsia canadensis (strain McKiel).